The primary structure comprises 577 residues: Arginine--tRNA ligase (577 aa).

Positions 122 to 132 match the 'HIGH' region motif; sequence PNVAKEMHVGH.

The protein belongs to the class-I aminoacyl-tRNA synthetase family. In terms of assembly, monomer.

It is found in the cytoplasm. The enzyme catalyses tRNA(Arg) + L-arginine + ATP = L-arginyl-tRNA(Arg) + AMP + diphosphate. In Escherichia coli O127:H6 (strain E2348/69 / EPEC), this protein is Arginine--tRNA ligase.